Consider the following 191-residue polypeptide: Elongation factor P (191 aa).

It belongs to the elongation factor P family.

Its subcellular location is the cytoplasm. The protein operates within protein biosynthesis; polypeptide chain elongation. Its function is as follows. Involved in peptide bond synthesis. Stimulates efficient translation and peptide-bond synthesis on native or reconstituted 70S ribosomes in vitro. Probably functions indirectly by altering the affinity of the ribosome for aminoacyl-tRNA, thus increasing their reactivity as acceptors for peptidyl transferase. In Bartonella henselae (strain ATCC 49882 / DSM 28221 / CCUG 30454 / Houston 1) (Rochalimaea henselae), this protein is Elongation factor P.